A 555-amino-acid chain; its full sequence is MKDTVMAYLLENSIKFKGKPNPKAAMGKILGENPDLRSKVKEVNQVISEVVKEIETMSLEEQQAKLDELAPEGLGQKTERKRKEIELKNVKGNVVMRFAPNPSGPLHIGHARASVLNDFFTKKYNGKLVLRLEDTDAKRVLPEAYEMIQEDLKWLGVKVDEVIVQSERLETYYEYGRKLIEMGQAYVCDCDADEFRTLREQGTLCKCRDTIPEENLKLWEKMLAGELDNVAVRLKTDIAHKNPSIRDFPIFRIERTPHPKNGIKYHVYPLMNLSVTVDDHLLGMTHVLRGKDHIVNTEKQEYIYNYFGWEIPEYVHYGILKIEGPVLSTSKMHAGILSGEYSGWDDARLGTLRALRKRGIRPEALYKLMVEIGIKQADVRFAWENLYAANKDIIDKDARRFFFVESPKKLVISGADSRKIDLRMHPDRSELGNRELLFDGEIYVSDDLEAGKMYRLMELFNIVVEKVENDILYAKYDSDDFAIAKSNKASIIHWIPVKDSVPVTVIDENAEKIEGFAEKDFAVVKEDDFVQFERFGFVRIDEKVDNGYTCYLTHK.

Positions 100-110 (PNPSGPLHIGH) match the 'HIGH' region motif.

It belongs to the class-I aminoacyl-tRNA synthetase family. Glutamate--tRNA ligase type 2 subfamily.

The protein localises to the cytoplasm. The enzyme catalyses tRNA(Glu) + L-glutamate + ATP = L-glutamyl-tRNA(Glu) + AMP + diphosphate. Functionally, catalyzes the attachment of glutamate to tRNA(Glu) in a two-step reaction: glutamate is first activated by ATP to form Glu-AMP and then transferred to the acceptor end of tRNA(Glu). This is Glutamate--tRNA ligase from Methanococcus maripaludis (strain C5 / ATCC BAA-1333).